Here is a 236-residue protein sequence, read N- to C-terminus: SERTA domain-containing protein 1 (236 aa).

The SERTA domain maps to 38-85 (PTVASSSLFDLSVVKLHHSLRQSEPDLRHLVLVVNTLRRIQASMEPAP). Residues 190-211 (ASEGLKPGPENGPAKEEPPELD) are disordered.

In terms of assembly, interacts with the PHD-bromodomain of TIF1, TRIM28/TIF1B and p300/CBP. Interacts with E2F1 and TFDP1; modulates transactivation activity of TFDP1/E2F complexes. Also interacts with CDK4. Polyubiquitinated, which promotes proteasomal degradation. Detected at in testis, lung and, at lower levels, in muscle, liver, spleen, brain and heart.

Functionally, acts at E2F-responsive promoters as coregulator to integrate signals provided by PHD- and/or bromodomain-containing transcription factors. Stimulates E2F1/TFDP1 transcriptional activity. Renders the activity of cyclin D1/CDK4 resistant to the inhibitory effects of CDKN2A/p16INK4A. The polypeptide is SERTA domain-containing protein 1 (Sertad1) (Mus musculus (Mouse)).